The following is a 341-amino-acid chain: Ribonucleoside-diphosphate reductase subunit beta (341 aa).

The Fe cation site is built by aspartate 89, glutamate 120, and histidine 123. Tyrosine 127 is a catalytic residue. Glutamate 185, glutamate 219, and histidine 222 together coordinate Fe cation.

It belongs to the ribonucleoside diphosphate reductase small chain family. As to quaternary structure, tetramer of two alpha and two beta subunits. It depends on Fe cation as a cofactor.

The enzyme catalyses a 2'-deoxyribonucleoside 5'-diphosphate + [thioredoxin]-disulfide + H2O = a ribonucleoside 5'-diphosphate + [thioredoxin]-dithiol. Functionally, provides the precursors necessary for DNA synthesis. Catalyzes the biosynthesis of deoxyribonucleotides from the corresponding ribonucleotides. The sequence is that of Ribonucleoside-diphosphate reductase subunit beta (nrdB) from Helicobacter pylori (strain J99 / ATCC 700824) (Campylobacter pylori J99).